Reading from the N-terminus, the 232-residue chain is 2,3,4,5-tetrahydropyridine-2,6-dicarboxylate N-acetyltransferase (232 aa).

This sequence belongs to the transferase hexapeptide repeat family. DapH subfamily.

It carries out the reaction (S)-2,3,4,5-tetrahydrodipicolinate + acetyl-CoA + H2O = L-2-acetamido-6-oxoheptanedioate + CoA. It functions in the pathway amino-acid biosynthesis; L-lysine biosynthesis via DAP pathway; LL-2,6-diaminopimelate from (S)-tetrahydrodipicolinate (acetylase route): step 1/3. Catalyzes the transfer of an acetyl group from acetyl-CoA to tetrahydrodipicolinate. This Streptococcus pneumoniae (strain CGSP14) protein is 2,3,4,5-tetrahydropyridine-2,6-dicarboxylate N-acetyltransferase.